Consider the following 275-residue polypeptide: Large ribosomal subunit protein uL2 (275 aa).

Disordered regions lie at residues 222-243 and 256-275; these read GSVM…PIGR and GGKT…KRKP.

Belongs to the universal ribosomal protein uL2 family. As to quaternary structure, part of the 50S ribosomal subunit. Forms a bridge to the 30S subunit in the 70S ribosome.

One of the primary rRNA binding proteins. Required for association of the 30S and 50S subunits to form the 70S ribosome, for tRNA binding and peptide bond formation. It has been suggested to have peptidyltransferase activity; this is somewhat controversial. Makes several contacts with the 16S rRNA in the 70S ribosome. The polypeptide is Large ribosomal subunit protein uL2 (Syntrophomonas wolfei subsp. wolfei (strain DSM 2245B / Goettingen)).